Reading from the N-terminus, the 166-residue chain is Crossover junction endodeoxyribonuclease RuvC (166 aa).

Catalysis depends on residues D7, E68, and D141. Mg(2+)-binding residues include D7, E68, and D141.

This sequence belongs to the RuvC family. In terms of assembly, homodimer which binds Holliday junction (HJ) DNA. The HJ becomes 2-fold symmetrical on binding to RuvC with unstacked arms; it has a different conformation from HJ DNA in complex with RuvA. In the full resolvosome a probable DNA-RuvA(4)-RuvB(12)-RuvC(2) complex forms which resolves the HJ. It depends on Mg(2+) as a cofactor.

The protein localises to the cytoplasm. It catalyses the reaction Endonucleolytic cleavage at a junction such as a reciprocal single-stranded crossover between two homologous DNA duplexes (Holliday junction).. Its function is as follows. The RuvA-RuvB-RuvC complex processes Holliday junction (HJ) DNA during genetic recombination and DNA repair. Endonuclease that resolves HJ intermediates. Cleaves cruciform DNA by making single-stranded nicks across the HJ at symmetrical positions within the homologous arms, yielding a 5'-phosphate and a 3'-hydroxyl group; requires a central core of homology in the junction. The consensus cleavage sequence is 5'-(A/T)TT(C/G)-3'. Cleavage occurs on the 3'-side of the TT dinucleotide at the point of strand exchange. HJ branch migration catalyzed by RuvA-RuvB allows RuvC to scan DNA until it finds its consensus sequence, where it cleaves and resolves the cruciform DNA. The chain is Crossover junction endodeoxyribonuclease RuvC from Caldicellulosiruptor saccharolyticus (strain ATCC 43494 / DSM 8903 / Tp8T 6331).